We begin with the raw amino-acid sequence, 103 residues long: Insulin (103 aa).

The signal sequence occupies residues 1 to 20 (IQSLPLLALLALSGPGTSHA). Disulfide bonds link Cys-27–Cys-89, Cys-39–Cys-102, and Cys-88–Cys-93. Positions 53–80 (DAEHPLVNGPLHGEVGDLPFQQEEFEKV) are cleaved as a propeptide — c peptide.

Belongs to the insulin family. Heterodimer of a B chain and an A chain linked by two disulfide bonds.

It localises to the secreted. In terms of biological role, insulin decreases blood glucose concentration. It increases cell permeability to monosaccharides, amino acids and fatty acids. It accelerates glycolysis, the pentose phosphate cycle, and glycogen synthesis in liver. This Selasphorus rufus (Rufous hummingbird) protein is Insulin (INS).